The primary structure comprises 871 residues: DNA mismatch repair protein MutS 1 (871 aa).

Glycine 614–serine 621 lines the ATP pocket.

Belongs to the DNA mismatch repair MutS family.

In terms of biological role, this protein is involved in the repair of mismatches in DNA. It is possible that it carries out the mismatch recognition step. This protein has a weak ATPase activity. The sequence is that of DNA mismatch repair protein MutS 1 from Halobacterium salinarum (strain ATCC 29341 / DSM 671 / R1).